We begin with the raw amino-acid sequence, 305 residues long: Oxygen-dependent coproporphyrinogen-III oxidase (305 aa).

Residue Ser-93 participates in substrate binding. His-97 and His-107 together coordinate a divalent metal cation. The active-site Proton donor is the His-107. Position 109 to 111 (109 to 111) interacts with substrate; that stretch reads NVR. 2 residues coordinate a divalent metal cation: His-146 and His-176. Residues 241-276 are important for dimerization; the sequence is YVEFNLVFDRGTLFGLQSGGRTESILMSLPPQVRWG. Residue 259-261 coordinates substrate; it reads GGR.

It belongs to the aerobic coproporphyrinogen-III oxidase family. In terms of assembly, homodimer. A divalent metal cation is required as a cofactor.

The protein localises to the cytoplasm. The enzyme catalyses coproporphyrinogen III + O2 + 2 H(+) = protoporphyrinogen IX + 2 CO2 + 2 H2O. It functions in the pathway porphyrin-containing compound metabolism; protoporphyrin-IX biosynthesis; protoporphyrinogen-IX from coproporphyrinogen-III (O2 route): step 1/1. Functionally, involved in the heme biosynthesis. Catalyzes the aerobic oxidative decarboxylation of propionate groups of rings A and B of coproporphyrinogen-III to yield the vinyl groups in protoporphyrinogen-IX. The polypeptide is Oxygen-dependent coproporphyrinogen-III oxidase (Pseudomonas aeruginosa (strain UCBPP-PA14)).